A 589-amino-acid chain; its full sequence is Peptide transporter PTR_A (589 aa).

Positions methionine 1–glycine 56 are disordered. A compositionally biased stretch (basic and acidic residues) spans aspartate 19–asparagine 42. 4 helical membrane passes run isoleucine 74–leucine 95, alanine 124–alanine 144, alanine 153–isoleucine 173, and asparagine 180–valine 200. Residue asparagine 233 is glycosylated (N-linked (GlcNAc...) asparagine). The next 8 membrane-spanning stretches (helical) occupy residues isoleucine 236 to alanine 256, phenylalanine 266 to leucine 286, valine 345 to isoleucine 365, isoleucine 388 to isoleucine 408, isoleucine 420 to phenylalanine 440, isoleucine 467 to threonine 487, serine 502 to leucine 522, and tryptophan 533 to phenylalanine 553.

The protein belongs to the major facilitator superfamily. Proton-dependent oligopeptide transporter (POT/PTR) (TC 2.A.17) family.

The protein resides in the cell membrane. The catalysed reaction is a dipeptide(out) + H(+)(out) = a dipeptide(in) + H(+)(in). It carries out the reaction an L-amino acid tripeptide(out) + H(+)(out) = an L-amino acid tripeptide(in) + H(+)(in). Functionally, peptide transporter that exploits the inwardly directed proton motive force to facilitate the cellular uptake of di/tripeptides. This chain is Peptide transporter PTR_A, found in Candidozyma auris (Yeast).